The following is a 449-amino-acid chain: Chromosomal replication initiator protein DnaA (449 aa).

Positions 1–73 (MDADLKNLWD…ANSIKAVCSK (73 aa)) are domain I, interacts with DnaA modulators. The domain II stretch occupies residues 73–110 (KLYTIEFIIMSEIYEKEEIKSSSNQKSKAIVVNDEMSS). The domain III, AAA+ region stretch occupies residues 111-327 (TLNPKYTFNS…GALIRIIAYS (217 aa)). ATP-binding residues include glycine 155, glycine 157, lysine 158, and threonine 159. Residues 328–449 (SLTNREVTVD…NDITKKLTQN (122 aa)) are domain IV, binds dsDNA.

Belongs to the DnaA family. Oligomerizes as a right-handed, spiral filament on DNA at oriC.

The protein localises to the cytoplasm. Functionally, plays an essential role in the initiation and regulation of chromosomal replication. ATP-DnaA binds to the origin of replication (oriC) to initiate formation of the DNA replication initiation complex once per cell cycle. Binds the DnaA box (a 9 base pair repeat at the origin) and separates the double-stranded (ds)DNA. Forms a right-handed helical filament on oriC DNA; dsDNA binds to the exterior of the filament while single-stranded (ss)DNA is stabiized in the filament's interior. The ATP-DnaA-oriC complex binds and stabilizes one strand of the AT-rich DNA unwinding element (DUE), permitting loading of DNA polymerase. After initiation quickly degrades to an ADP-DnaA complex that is not apt for DNA replication. Binds acidic phospholipids. This chain is Chromosomal replication initiator protein DnaA, found in Clostridium beijerinckii (strain ATCC 51743 / NCIMB 8052) (Clostridium acetobutylicum).